We begin with the raw amino-acid sequence, 182 residues long: uncharacterized protein (182 aa).

The protein to H.pylori HP0274.

This is an uncharacterized protein from Methanocaldococcus jannaschii (strain ATCC 43067 / DSM 2661 / JAL-1 / JCM 10045 / NBRC 100440) (Methanococcus jannaschii).